Reading from the N-terminus, the 398-residue chain is 1-deoxy-D-xylulose 5-phosphate reductoisomerase (398 aa).

The NADPH site is built by T10, G11, S12, V13, G36, R37, N38, and N124. K125 is a 1-deoxy-D-xylulose 5-phosphate binding site. Residue E126 coordinates NADPH. Position 150 (D150) interacts with Mn(2+). Residues S151, E152, S186, and H209 each contribute to the 1-deoxy-D-xylulose 5-phosphate site. E152 contributes to the Mn(2+) binding site. An NADPH-binding site is contributed by G215. Positions 222, 227, 228, and 231 each coordinate 1-deoxy-D-xylulose 5-phosphate. Residue E231 coordinates Mn(2+).

This sequence belongs to the DXR family. As to quaternary structure, homodimer. Requires Mg(2+) as cofactor. Mn(2+) is required as a cofactor.

It catalyses the reaction 2-C-methyl-D-erythritol 4-phosphate + NADP(+) = 1-deoxy-D-xylulose 5-phosphate + NADPH + H(+). The protein operates within isoprenoid biosynthesis; isopentenyl diphosphate biosynthesis via DXP pathway; isopentenyl diphosphate from 1-deoxy-D-xylulose 5-phosphate: step 1/6. Functionally, catalyzes the NADPH-dependent rearrangement and reduction of 1-deoxy-D-xylulose-5-phosphate (DXP) to 2-C-methyl-D-erythritol 4-phosphate (MEP). The polypeptide is 1-deoxy-D-xylulose 5-phosphate reductoisomerase (Serratia proteamaculans (strain 568)).